We begin with the raw amino-acid sequence, 407 residues long: Putative glycosyltransferase YtcC (407 aa).

Belongs to the glycosyltransferase group 1 family. Glycosyltransferase 4 subfamily.

The chain is Putative glycosyltransferase YtcC (ytcC) from Bacillus subtilis (strain 168).